A 274-amino-acid chain; its full sequence is MGIKIYKPTSPGRRHQTCSSFEEITTSTPEKSLLIKLKKSGGRNALGRVTSRHQGGGHKQKYRIIDFRRDKISIPAKVASIEYDPYRSARIALLHYVDGEKRYILAPLDLKVGDTVLSGPEADIKPGNALPLKAIPLGTIIHNVELKLGKGAQLARSAGTFAQLMAKEGRYSQVKLPSGEVRMVLQDCYATIGQVGNVDHEKVSLGKAGRARWLGKRPKVRGVAMNPVDHPHGGGEGRTSGGRHPVTPWGIPTKGYKTRTNKSTDRFIVKKRTK.

The interval 223-258 is disordered; the sequence is VAMNPVDHPHGGGEGRTSGGRHPVTPWGIPTKGYKT.

It belongs to the universal ribosomal protein uL2 family. Part of the 50S ribosomal subunit. Forms a bridge to the 30S subunit in the 70S ribosome.

Functionally, one of the primary rRNA binding proteins. Required for association of the 30S and 50S subunits to form the 70S ribosome, for tRNA binding and peptide bond formation. It has been suggested to have peptidyltransferase activity; this is somewhat controversial. Makes several contacts with the 16S rRNA in the 70S ribosome. This Pelobacter propionicus (strain DSM 2379 / NBRC 103807 / OttBd1) protein is Large ribosomal subunit protein uL2.